Reading from the N-terminus, the 1388-residue chain is Kinesin-like protein KIF15-A (1388 aa).

The Kinesin motor domain maps to 26–364; the sequence is AIKVFVRIRP…LQFAQRAKLI (339 aa). 110 to 117 contacts ATP; sequence GQTGSGKT. Positions 369–1383 form a coiled coil; sequence VVNEDTQGNV…ENLFLKESKK (1015 aa). Residues 1127 to 1156 form a disordered region; it reads EQEKIRPASSNSSSPVVLPETPRTPEGNPY. The necessary for its targeting to microtubule minus ends stretch occupies residues 1139–1388; sequence SSPVVLPETP…KESKKCEHCN (250 aa).

The protein belongs to the TRAFAC class myosin-kinesin ATPase superfamily. Kinesin family. KLP2 subfamily. In terms of assembly, homodimer. Dimerization is required for targeting to microtubule minus ends. Found in a complex with tpx2 and microtubules. Its association with microtubules and targeting to microtubule minus ends requires tpx2. In terms of tissue distribution, strongly expressed in testis and weakly in lung (at protein level).

The protein resides in the cytoplasm. It is found in the cytoskeleton. Its subcellular location is the microtubule organizing center. It localises to the centrosome. The protein localises to the spindle. The protein resides in the spindle pole. In terms of biological role, plus-end directed kinesin-like motor enzyme involved in mitotic spindle assembly. Required for centrosome separation and maintenance of spindle bipolarity during mitosis. The sequence is that of Kinesin-like protein KIF15-A (kif15-a) from Xenopus laevis (African clawed frog).